The sequence spans 1213 residues: DNA-directed RNA polymerase subunit beta' (1213 aa).

Positions 60, 62, 75, and 78 each coordinate Zn(2+). Mg(2+)-binding residues include D449, D451, and D453. Zn(2+) contacts are provided by C818, C892, C899, and C902.

Belongs to the RNA polymerase beta' chain family. As to quaternary structure, the RNAP catalytic core consists of 2 alpha, 1 beta, 1 beta' and 1 omega subunit. When a sigma factor is associated with the core the holoenzyme is formed, which can initiate transcription. Mg(2+) serves as cofactor. Requires Zn(2+) as cofactor.

The enzyme catalyses RNA(n) + a ribonucleoside 5'-triphosphate = RNA(n+1) + diphosphate. Functionally, DNA-dependent RNA polymerase catalyzes the transcription of DNA into RNA using the four ribonucleoside triphosphates as substrates. In Lactiplantibacillus plantarum (strain ATCC BAA-793 / NCIMB 8826 / WCFS1) (Lactobacillus plantarum), this protein is DNA-directed RNA polymerase subunit beta'.